The chain runs to 626 residues: (+)-3-carene synthase 2, chloroplastic (626 aa).

The transit peptide at 1–45 directs the protein to the chloroplast; sequence MSLISAVPLASSCVSKSLISSVREHTALRRAIATLQMSRRGKSVA. Residues Asp377, Asp381, and Asp529 each coordinate Mg(2+). A DDXXD motif motif is present at residues 377–381; the sequence is DDMYD.

This sequence belongs to the terpene synthase family. Tpsd subfamily. Mg(2+) is required as a cofactor. It depends on Mn(2+) as a cofactor.

The protein localises to the plastid. The protein resides in the chloroplast. The enzyme catalyses (2E)-geranyl diphosphate = (+)-car-3-ene + diphosphate. The protein operates within terpene metabolism; oleoresin biosynthesis. It participates in secondary metabolite biosynthesis; terpenoid biosynthesis. Functionally, monoterpene synthase (TPS) involved in the biosynthesis of monoterpene natural products included in conifer oleoresin secretions and volatile emissions; these compounds contribute to biotic and abiotic stress defense against herbivores and pathogens. Catalyzes the conversion of (2E)-geranyl diphosphate (GPP) to (+)-3-carene. In Pinus banksiana (Jack pine), this protein is (+)-3-carene synthase 2, chloroplastic.